Reading from the N-terminus, the 770-residue chain is Tripartite terminase subunit 1 (770 aa).

The C3H1-type zinc finger occupies 199 to 227; sequence CAICFEELCITANQGETLHRRLLGCICDH. Position 675–682 (675–682) interacts with ATP; the sequence is FTSVFHCG.

Belongs to the herpesviridae TRM1 protein family. In terms of assembly, associates with TRM2 and TRM3 to form the tripartite terminase complex. Interacts with portal protein.

The protein localises to the host nucleus. Its function is as follows. Component of the molecular motor that translocates viral genomic DNA in empty capsid during DNA packaging. Forms a tripartite terminase complex together with TRM2 and TRM3 in the host cytoplasm. Once the complex reaches the host nucleus, it interacts with the capsid portal vertex. This portal forms a ring in which genomic DNA is translocated into the capsid. TRM1 carries an endonuclease activity that plays an important role for the cleavage of concatemeric viral DNA into unit length genomes. This Varicella-zoster virus (strain Dumas) (HHV-3) protein is Tripartite terminase subunit 1.